The sequence spans 643 residues: Threonine--tRNA ligase (643 aa).

Positions 1-61 (MIKITLKDGS…NEDSSLEICT (61 aa)) constitute a TGS domain. A catalytic region spans residues 240-540 (DHNKLGRELG…LIEKYAGALP (301 aa)). Residues Cys335, His386, and His517 each coordinate Zn(2+).

Belongs to the class-II aminoacyl-tRNA synthetase family. Homodimer. Zn(2+) serves as cofactor.

Its subcellular location is the cytoplasm. The enzyme catalyses tRNA(Thr) + L-threonine + ATP = L-threonyl-tRNA(Thr) + AMP + diphosphate + H(+). Functionally, catalyzes the attachment of threonine to tRNA(Thr) in a two-step reaction: L-threonine is first activated by ATP to form Thr-AMP and then transferred to the acceptor end of tRNA(Thr). Also edits incorrectly charged L-seryl-tRNA(Thr). The protein is Threonine--tRNA ligase of Clostridium perfringens (strain SM101 / Type A).